A 115-amino-acid polypeptide reads, in one-letter code: MADVVLGVGTGVFIITLIWILTLALTIILSRATGPTKLGIIPVVLLALIITLVLVFFPRAAEVPAPQRAAQIVDMFFIGRYVLLSLVSLVFLAALFMLLPLHFLEPIYAKPLRTH.

3 helical membrane passes run 8-28 (VGTGVFIITLIWILTLALTII), 38-58 (LGIIPVVLLALIITLVLVFFP), and 81-101 (YVLLSLVSLVFLAALFMLLPL).

This sequence belongs to the TMEM218 family.

The protein localises to the membrane. The protein resides in the cell projection. It localises to the cilium. May be involved in ciliary biogenesis or function. This is Transmembrane protein 218 (tmem218) from Danio rerio (Zebrafish).